Consider the following 35-residue polypeptide: U1-segestritoxin-Sf1a (35 aa).

Intrachain disulfides connect Cys-10–Cys-22 and Cys-17–Cys-28. The segment at 31 to 33 (DPW) is keys region for toxin activity.

This sequence belongs to the neurotoxin 16 (SFI) family. Expressed by the venom gland.

The protein localises to the secreted. Its function is as follows. Insecticidal toxin. This chain is U1-segestritoxin-Sf1a, found in Segestria florentina (Tube-web spider).